A 633-amino-acid chain; its full sequence is Threonine--tRNA ligase (633 aa).

Residues 1 to 61 (MPAIRLPDGS…DHDVDLAIVT (61 aa)) form the TGS domain. The interval 242-533 (DHRKLGRQLD…LIEHHAGAMP (292 aa)) is catalytic. Zn(2+) contacts are provided by Cys-333, His-384, and His-510.

Belongs to the class-II aminoacyl-tRNA synthetase family. As to quaternary structure, homodimer. Zn(2+) is required as a cofactor.

The protein localises to the cytoplasm. The enzyme catalyses tRNA(Thr) + L-threonine + ATP = L-threonyl-tRNA(Thr) + AMP + diphosphate + H(+). In terms of biological role, catalyzes the attachment of threonine to tRNA(Thr) in a two-step reaction: L-threonine is first activated by ATP to form Thr-AMP and then transferred to the acceptor end of tRNA(Thr). Also edits incorrectly charged L-seryl-tRNA(Thr). This Laribacter hongkongensis (strain HLHK9) protein is Threonine--tRNA ligase.